The primary structure comprises 337 residues: GTP 3',8-cyclase (337 aa).

The Radical SAM core domain occupies 17–242; sequence TFQREYYYLR…RQKDRTDGPA (226 aa). Residue Arg-26 participates in GTP binding. [4Fe-4S] cluster contacts are provided by Cys-33 and Cys-37. Tyr-39 serves as a coordination point for S-adenosyl-L-methionine. Cys-40 contacts [4Fe-4S] cluster. Residue Arg-76 coordinates GTP. Position 80 (Gly-80) interacts with S-adenosyl-L-methionine. Thr-107 is a binding site for GTP. Ser-131 serves as a coordination point for S-adenosyl-L-methionine. Lys-168 contacts GTP. Met-202 contacts S-adenosyl-L-methionine. Positions 265 and 268 each coordinate [4Fe-4S] cluster. 270 to 272 contributes to the GTP binding site; sequence RLR. Cys-282 is a binding site for [4Fe-4S] cluster.

This sequence belongs to the radical SAM superfamily. MoaA family. Monomer and homodimer. The cofactor is [4Fe-4S] cluster.

It carries out the reaction GTP + AH2 + S-adenosyl-L-methionine = (8S)-3',8-cyclo-7,8-dihydroguanosine 5'-triphosphate + 5'-deoxyadenosine + L-methionine + A + H(+). It functions in the pathway cofactor biosynthesis; molybdopterin biosynthesis. Catalyzes the cyclization of GTP to (8S)-3',8-cyclo-7,8-dihydroguanosine 5'-triphosphate. This is GTP 3',8-cyclase from Mannheimia succiniciproducens (strain KCTC 0769BP / MBEL55E).